The chain runs to 287 residues: MATKPQDANTTSREAITSKADSPPRPTALIFDSGVGGLSVYQEIRQLLPDLHYIYAFDNVAFPYGEKSGEFIVERVLEIVTAVQQRHPLAIVVIACNTASTVSLPALRERFAFPVVGVVPAIKPAVRLTRNGVVGLLATRATVHASYTLDLIARFATDCKIELLGSSELVEVAETKLHGGVVPLEVLKKILHPWLSMREPPDTIVLGCTHFPLLTEELAQVLPEGTRMVDSGAAIARRTAWLISSQENVISSQDENIAYCMALDEDTDALLPVLQSYGFPKLQKLPI.

A compositionally biased stretch (polar residues) spans 1 to 15 (MATKPQDANTTSREA). The segment at 1-25 (MATKPQDANTTSREAITSKADSPPR) is disordered. Residues 32 to 33 (DS) and 64 to 65 (YG) contribute to the substrate site. Cys-96 (proton donor/acceptor) is an active-site residue. A substrate-binding site is contributed by 97 to 98 (NT). The Proton donor/acceptor role is filled by Cys-208. Position 209 to 210 (209 to 210 (TH)) interacts with substrate.

Belongs to the aspartate/glutamate racemases family.

It catalyses the reaction L-glutamate = D-glutamate. The protein operates within cell wall biogenesis; peptidoglycan biosynthesis. Functionally, provides the (R)-glutamate required for cell wall biosynthesis. This Yersinia pseudotuberculosis serotype O:1b (strain IP 31758) protein is Glutamate racemase.